The chain runs to 1083 residues: Histone-lysine N-methyltransferase ATX2 (1083 aa).

The Nuclear localization signal motif lies at 77 to 84 (HRRPEIVH). Positions 315–379 (PRDIIWAKLT…VKQAVSFLKG (65 aa)) constitute a PWWP domain. Residues 422–443 (TDCSERINSGEEDSSNSGDDYT) form a disordered region. An FYR N-terminal domain is found at 457–516 (DCLHRIGDLQIINLGRIVTDSEFFKDSKHTWPEGYTATRKFISLKDPNASAMYKMEVLRD). Residues 520-604 (KTRPVFRVTT…PPSKVSQRKY (85 aa)) form the FYR C-terminal domain. Residues 626-677 (LDKCNVCHMDEEYENNLFLQCDKCRMMVHTRCYGQLEPHNGILWLCNLCRPV) form a PHD-type 1 zinc finger. The C2HC pre-PHD-type zinc finger occupies 682–715 (PPRCCLCPVVGGAMKPTTDGRWAHLACAIWIPET). Residues 682 to 807 (PPRCCLCPVV…RLLSFCKRHR (126 aa)) are extended PHD domain (ePHD). The PHD-type 2 zinc finger occupies 739 to 807 (LLCSICGVSY…RLLSFCKRHR (69 aa)). The region spanning 919–1037 (KRLAFGKSGI…KWEELTYDYR (119 aa)) is the SET domain. Position 929 (histidine 929) interacts with S-adenosyl-L-methionine. Serine 968 is a glycosylation site (O-linked (GlcNAc) serine). S-adenosyl-L-methionine is bound by residues tyrosine 975 and 998–999 (NH). Cysteine 1001 provides a ligand contact to Zn(2+). Residue tyrosine 1036 coordinates S-adenosyl-L-methionine. Positions 1043-1059 (ERLACYCGFPRCRGVVN) constitute a Post-SET domain. Zn(2+)-binding residues include cysteine 1047, cysteine 1049, and cysteine 1054.

The protein belongs to the class V-like SAM-binding methyltransferase superfamily. Histone-lysine methyltransferase family. TRX/MLL subfamily. Activated via O-glycosylation. Expressed in roots, leaves and flowers and, to a lower extent, in young seedlings.

It is found in the nucleus. It carries out the reaction N(6)-methyl-L-lysyl-[histone] + S-adenosyl-L-methionine = N(6),N(6)-dimethyl-L-lysyl-[histone] + S-adenosyl-L-homocysteine + H(+). Functionally, histone methyltransferase. Dimethylates 'Lys-4' of histone H3 (H3K4me2). H3 'Lys-4' methylation represents a specific tag for epigenetic transcriptional activation. Methylates only a limited fraction of nucleosomes of target genes (e.g. NAP and XTH33). Involved in epigenetic regulation of the floral repressor FLC and FT to prevent the transition from vegetative to reproductive development. The sequence is that of Histone-lysine N-methyltransferase ATX2 from Arabidopsis thaliana (Mouse-ear cress).